The following is a 940-amino-acid chain: MSVSIGDKIEDFKVLTLLGKGSFACVYRAKSVNTGLEVAIKMIDKKAMHKAGMVQRVINEVEIQCRLKHPSVLELYNYFEDSNYVYLVLEMCHNGEMSRYLKERKNPFTEEEARHFMHQIVKGMLYLHTHGIMHRDLTLTNLLLTTSMNIKIADFGLATQLKLPSEKHFTMCGTPNYISPEVATRSAHGLESDVWSLGCMFYAFLTGRPPFDTDTVKRTLNKVVLGEYQMPMHISAEAQDLIQQLLQKNPALRPSLSAVLDHPFMTQSGPTASKDSGSSNGGSIDSGIATISTASNATNNSSSSRLQRRTRQMIGQPLPSRMAPIPSHSHHSTSSSFKSGQDWQPNSQDDLSRMGVGRIPVGADSGRPHSRYLRRAHSSDRSAVGYSHNPQEAELERCHSEEMLSGAGRLFPQTSGYRNAPHGYSKHDRLPSPPVKQPANPASSFSTSTHSTRQQMPDSQTQPWFSNDGVFKRPADMSGHSSSGSFHSERGPIGTQTSCSDKPSGLHSQQQPILFQHNNPGPCREDAFVSGHMSEPQAYSDAQFPCPPLSKGKANTEKKDKVCLKKSFPPLCAARLKPIRQKTKNAVVSILGNGEVCMELLKGQGAQERVKEVLRISCDGSMVTVYQPNEGKGFPVLDHPPSPPEDILICSFDDLPEKYWKKYQYATKFVQLVKSKTPKVTLYTKFAKCMLMENSPNPDLEVCFYDGAKTHKTSEQVRVVEKSGKSYTVKGDVGLSGLNPECRLYIELSEEGHRMCLSLEAAITAEEQRSAKNTPFFPITIGRRPVNPVPPAPAPSSSSSCRPAAAAEVAHVCLSPPQHPQITPSMISYAGSDLTTASVAKGSSPVHKDERTVNSGKVLKSIFVPNIGWVSQLTTGEVWVQFNDGSQLMVQVGVSCIIFTSPEGHITRYKENEKLPELVKEKLHCLSSILGLLANPAARC.

One can recognise a Protein kinase domain in the interval 12 to 265 (FKVLTLLGKG…LSAVLDHPFM (254 aa)). ATP-binding positions include 18–26 (LGKGSFACV) and Lys-41. Asp-136 serves as the catalytic Proton acceptor. Disordered regions lie at residues 262-353 (HPFM…DLSR) and 409-529 (RLFP…DAFV). Positions 273-305 (SKDSGSSNGGSIDSGIATISTASNATNNSSSSR) are enriched in low complexity. Polar residues-rich tracts occupy residues 337-349 (FKSG…NSQD), 440-465 (NPAS…QPWF), and 494-519 (GTQT…QHNN). Residues 563–676 (CLKKSFPPLC…TKFVQLVKSK (114 aa)) enclose the Cryptic POLO box 1 (CPB1) domain. The Cryptic POLO box 2 (CPB2) domain occupies 677–791 (TPKVTLYTKF…GRRPVNPVPP (115 aa)). A POLO box domain is found at 857–935 (KVLKSIFVPN…LSSILGLLAN (79 aa)).

This sequence belongs to the protein kinase superfamily. Ser/Thr protein kinase family. CDC5/Polo subfamily. As to quaternary structure, homodimer. Post-translationally, ubiquitinated; leading to its degradation by the proteasome.

The protein resides in the cytoplasm. It localises to the cytoskeleton. It is found in the microtubule organizing center. The protein localises to the centrosome. Its subcellular location is the centriole. The catalysed reaction is L-seryl-[protein] + ATP = O-phospho-L-seryl-[protein] + ADP + H(+). It catalyses the reaction L-threonyl-[protein] + ATP = O-phospho-L-threonyl-[protein] + ADP + H(+). Its function is as follows. Serine/threonine-protein kinase that plays a central role in centriole duplication. Able to trigger procentriole formation on the surface of the parental centriole cylinder, leading to the recruitment of centriole biogenesis proteins such as sass6, cpap, ccp110, cep135 and gamma-tubulin. When overexpressed, it is able to induce centrosome amplification through the simultaneous generation of multiple procentrioles adjoining each parental centriole during S phase. Its central role in centriole replication suggests a possible role in tumorigenesis, centrosome aberrations being frequently observed in tumors. Also involved in deuterosome-mediated centriole amplification in multiciliated that can generate more than 100 centrioles. This is Serine/threonine-protein kinase PLK4 from Danio rerio (Zebrafish).